Here is a 796-residue protein sequence, read N- to C-terminus: Putative aconitate hydratase, mitochondrial (796 aa).

Residues 1-28 constitute a mitochondrion transit peptide; it reads MLRQIVSQRSAARRQLIDQLAPCLRRGL. Substrate is bound by residues glutamine 108 and 201 to 203; that span reads DSH. [4Fe-4S] cluster is bound by residues cysteine 399, cysteine 462, and cysteine 465. 2 residues coordinate substrate: arginine 489 and arginine 494. Residues 540–569 are disordered; sequence EPPTGQDLPSKGFEAGNPAFQPSAPVPDSS. 685 to 686 is a binding site for substrate; the sequence is AR.

It belongs to the aconitase/IPM isomerase family.

Its subcellular location is the mitochondrion. In terms of biological role, has no detectable activity towards cis-acontiate or cis-homoaconitate. The chain is Putative aconitate hydratase, mitochondrial (acoB) from Emericella nidulans (strain FGSC A4 / ATCC 38163 / CBS 112.46 / NRRL 194 / M139) (Aspergillus nidulans).